The following is a 504-amino-acid chain: Dolichol kinase sec59 (504 aa).

Residues 1 to 55 (MYIMSKKCYDTSEKIDREQECVEVNYQHRNFESILEIFSVLFIPFLCNSGKKFLQ) lie on the Cytoplasmic side of the membrane. A helical membrane pass occupies residues 56–76 (ISNASFFLPACFYLLGSSSII). A topological domain (lumenal) is located at residue Gln77. A helical transmembrane segment spans residues 78–98 (LYEPLLWLSSFPFCILYVGFG). Topologically, residues 99 to 157 (ENSVLYHEMYTVCLYNALLSLTQRWKWLSIVLDGLGNSSVNLKLHETVILAFLEITQNS) are cytoplasmic. The helical transmembrane segment at 158-178 (FTFIEGILICTGLTGLCFATF) threads the bilayer. The Lumenal portion of the chain corresponds to 179-187 (SYEVSPVVS). The chain crosses the membrane as a helical span at residues 188-208 (VLSGVLLISLPTLILLNLCIL). The Cytoplasmic portion of the chain corresponds to 209–215 (KLAAKLH). Residues 216-236 (LSALFTTCLIYFFSALLVFLV) traverse the membrane as a helical segment. At 237 to 263 (SRSWVAGQLGQAPEVWLFNQIFSHRNS) the chain is on the lumenal side. A helical transmembrane segment spans residues 264-284 (LTRIKIIIWWIICLGCFIFIL). Residues 285 to 325 (LRSNRNNPLGKYFTTEDEVLNFRRKTYHALVVFLFLPVCCL) are Cytoplasmic-facing. A helical membrane pass occupies residues 326–347 (DPHFLHLSFSGVLFIFLFVEGI). At 348 to 373 (RILRLKPFGKMIHEFLWEYTDNRDHK) the chain is on the lumenal side. The chain crosses the membrane as a helical span at residues 374–394 (GPLIISHIYLLIGCAIPIWLS). Residues 395-403 (NALKGPVAS) are Cytoplasmic-facing. A helical transmembrane segment spans residues 404 to 424 (VELLVGVLCLGCGDSMASIIG). Over 425 to 440 (KRFGKHRISKTNKSIE) the chain is Lumenal. A helical transmembrane segment spans residues 441–461 (GVFAFSISVFLVLHLTQAFHV). Residue Cys462 is a topological domain, cytoplasmic. The helical transmembrane segment at 463 to 483 (PSVTFWKTLFMSLCTAILEGV) threads the bilayer. Residues 484–504 (STENDNLILPMYMWVLYQALD) are Lumenal-facing.

It belongs to the polyprenol kinase family.

It localises to the endoplasmic reticulum membrane. It carries out the reaction a di-trans,poly-cis-dolichol + CTP = a di-trans,poly-cis-dolichyl phosphate + CDP + H(+). The protein operates within protein modification; protein glycosylation. Catalyzes CTP-mediated phosphorylation of dolichol, the terminal step in de novo dolichyl monophosphate (Dol-P) biosynthesis. Dol-P is a lipid carrier essential for the synthesis of N-linked and O-linked oligosaccharides and for GPI anchors. This chain is Dolichol kinase sec59, found in Schizosaccharomyces pombe (strain 972 / ATCC 24843) (Fission yeast).